A 263-amino-acid polypeptide reads, in one-letter code: Acyl-[acyl-carrier-protein]--UDP-N-acetylglucosamine O-acyltransferase (263 aa).

This sequence belongs to the transferase hexapeptide repeat family. LpxA subfamily. Homotrimer.

Its subcellular location is the cytoplasm. It catalyses the reaction a (3R)-hydroxyacyl-[ACP] + UDP-N-acetyl-alpha-D-glucosamine = a UDP-3-O-[(3R)-3-hydroxyacyl]-N-acetyl-alpha-D-glucosamine + holo-[ACP]. The protein operates within glycolipid biosynthesis; lipid IV(A) biosynthesis; lipid IV(A) from (3R)-3-hydroxytetradecanoyl-[acyl-carrier-protein] and UDP-N-acetyl-alpha-D-glucosamine: step 1/6. In terms of biological role, involved in the biosynthesis of lipid A, a phosphorylated glycolipid that anchors the lipopolysaccharide to the outer membrane of the cell. In Campylobacter jejuni subsp. jejuni serotype O:2 (strain ATCC 700819 / NCTC 11168), this protein is Acyl-[acyl-carrier-protein]--UDP-N-acetylglucosamine O-acyltransferase.